Consider the following 52-residue polypeptide: UPF0181 protein HI_1434.2 (52 aa).

It belongs to the UPF0181 family.

In Haemophilus influenzae (strain ATCC 51907 / DSM 11121 / KW20 / Rd), this protein is UPF0181 protein HI_1434.2.